The chain runs to 428 residues: Keratin, type I cytoskeletal 18-A (428 aa).

The segment at 2–78 (SFRSQTSSTT…SVKGSGLFNN (77 aa)) is head. The interval 79–114 (EKETMQILNDRLASYLETVRNLEQANSKLELQIRET) is coil 1A. The 312-residue stretch at 79 to 390 (EKETMQILND…RLLDGEDFRL (312 aa)) folds into the IF rod domain. The segment at 115-131 (LEKRGPTTQDYSAYEKV) is linker 1. Positions 132-223 (VEDLKSQIYD…RSHQTDVEEL (92 aa)) are coil 1B. Residues 224-247 (RKHISECGVQVDVDAPKGQDLSKI) form a linker 12 region. The tract at residues 248–385 (MEEIRAQYET…IATYRRLLDG (138 aa)) is coil 2. The interval 386-428 (EDFRLQDALAVQTTKVQKKITVTETVVDGKVVSQSSEVQEIKK) is tail.

This sequence belongs to the intermediate filament family. In terms of assembly, heterotetramer of two type I and two type II keratins. Keratin-18 associates with keratin-8. Post-translationally, phosphorylated. In terms of processing, proteolytically cleaved by caspases during epithelial cell apoptosis.

Its function is as follows. When phosphorylated, plays a role in filament reorganization. This Polypterus senegalus (Senegal bichir) protein is Keratin, type I cytoskeletal 18-A.